Reading from the N-terminus, the 446-residue chain is Adenylosuccinate synthetase (446 aa).

GTP is bound by residues 21-27 (GDEGKGK) and 49-51 (GHT). Aspartate 22 functions as the Proton acceptor in the catalytic mechanism. Mg(2+)-binding residues include aspartate 22 and glycine 49. Residues 22–25 (DEGK), 47–50 (NAGH), threonine 141, arginine 155, glutamine 236, threonine 251, and arginine 319 each bind IMP. The active-site Proton donor is histidine 50. 315–321 (VTTGRSR) contributes to the substrate binding site. GTP contacts are provided by residues arginine 321, 347-349 (KLD), and 429-431 (STS).

Belongs to the adenylosuccinate synthetase family. Homodimer. The cofactor is Mg(2+).

It localises to the cytoplasm. The enzyme catalyses IMP + L-aspartate + GTP = N(6)-(1,2-dicarboxyethyl)-AMP + GDP + phosphate + 2 H(+). It functions in the pathway purine metabolism; AMP biosynthesis via de novo pathway; AMP from IMP: step 1/2. Plays an important role in the de novo pathway of purine nucleotide biosynthesis. Catalyzes the first committed step in the biosynthesis of AMP from IMP. This chain is Adenylosuccinate synthetase, found in Polaromonas sp. (strain JS666 / ATCC BAA-500).